Reading from the N-terminus, the 525-residue chain is Bifunctional purine biosynthesis protein PurH (525 aa).

Residues 1-148 form the MGS-like domain; the sequence is MPSNNLIKNA…KNYKNVIVIV (148 aa).

This sequence belongs to the PurH family.

It carries out the reaction (6R)-10-formyltetrahydrofolate + 5-amino-1-(5-phospho-beta-D-ribosyl)imidazole-4-carboxamide = 5-formamido-1-(5-phospho-D-ribosyl)imidazole-4-carboxamide + (6S)-5,6,7,8-tetrahydrofolate. The enzyme catalyses IMP + H2O = 5-formamido-1-(5-phospho-D-ribosyl)imidazole-4-carboxamide. The protein operates within purine metabolism; IMP biosynthesis via de novo pathway; 5-formamido-1-(5-phospho-D-ribosyl)imidazole-4-carboxamide from 5-amino-1-(5-phospho-D-ribosyl)imidazole-4-carboxamide (10-formyl THF route): step 1/1. It functions in the pathway purine metabolism; IMP biosynthesis via de novo pathway; IMP from 5-formamido-1-(5-phospho-D-ribosyl)imidazole-4-carboxamide: step 1/1. This Buchnera aphidicola subsp. Acyrthosiphon pisum (strain APS) (Acyrthosiphon pisum symbiotic bacterium) protein is Bifunctional purine biosynthesis protein PurH.